Consider the following 609-residue polypeptide: UvrABC system protein C (609 aa).

In terms of domain architecture, GIY-YIG spans 13–91; it reads HQPGVYRMFD…IKAFQPRYNV (79 aa). The 36-residue stretch at 201 to 236 folds into the UVR domain; sequence QQVLEHLIKKMEQASMQLNFEQAAYFRDQIQAIRAV.

This sequence belongs to the UvrC family. Interacts with UvrB in an incision complex.

The protein localises to the cytoplasm. The UvrABC repair system catalyzes the recognition and processing of DNA lesions. UvrC both incises the 5' and 3' sides of the lesion. The N-terminal half is responsible for the 3' incision and the C-terminal half is responsible for the 5' incision. In Histophilus somni (strain 129Pt) (Haemophilus somnus), this protein is UvrABC system protein C.